Here is a 237-residue protein sequence, read N- to C-terminus: MNYKYKTVLLKLSGEALKGDAEVYDKKCLEDIASQIIHLVKNGLKLGIVIGGGNIWRGKLGENIGMDAINADYMGMLATVMNGLALESTITKMGYDKIKVYSSLPIKTVTDDYNFKKARIKMNEGFISIFVGGTGYSYFTTDTNATIRAIEIGAEAILMAKNGVKGVYDKDPKQHKDAKFIKKISHQEIVDKQLRIMDLTAATLAKDANLKIEVFDMSGDNNIIKVLENKLESTIIE.

ATP is bound at residue 11-14 (KLSG). G52 contacts UMP. Residues G53 and R57 each contribute to the ATP site. UMP contacts are provided by residues D72 and 134 to 141 (TGYSYFTT). N162, Y168, and D171 together coordinate ATP.

The protein belongs to the UMP kinase family. As to quaternary structure, homohexamer.

Its subcellular location is the cytoplasm. The catalysed reaction is UMP + ATP = UDP + ADP. It participates in pyrimidine metabolism; CTP biosynthesis via de novo pathway; UDP from UMP (UMPK route): step 1/1. With respect to regulation, inhibited by UTP. Its function is as follows. Catalyzes the reversible phosphorylation of UMP to UDP. The sequence is that of Uridylate kinase from Mycoplasma capricolum subsp. capricolum (strain California kid / ATCC 27343 / NCTC 10154).